A 305-amino-acid polypeptide reads, in one-letter code: HPr kinase/phosphorylase (305 aa).

Residues His-136 and Lys-157 contribute to the active site. 151 to 158 (GESGIGKS) contacts ATP. Ser-158 is a binding site for Mg(2+). Residue Asp-175 is the Proton acceptor; for phosphorylation activity. Proton donor; for dephosphorylation activity of the active site. The tract at residues 198–207 (LEVRGLGIID) is important for the catalytic mechanism of both phosphorylation and dephosphorylation. Glu-199 is a Mg(2+) binding site. Arg-240 is a catalytic residue. An important for the catalytic mechanism of dephosphorylation region spans residues 261–266 (PIRPGR).

This sequence belongs to the HPrK/P family. In terms of assembly, homohexamer. Mg(2+) serves as cofactor.

It catalyses the reaction [HPr protein]-L-serine + ATP = [HPr protein]-O-phospho-L-serine + ADP + H(+). The enzyme catalyses [HPr protein]-O-phospho-L-serine + phosphate + H(+) = [HPr protein]-L-serine + diphosphate. Its function is as follows. Catalyzes the ATP- as well as the pyrophosphate-dependent phosphorylation of a specific serine residue in HPr, a phosphocarrier protein of the phosphoenolpyruvate-dependent sugar phosphotransferase system (PTS). HprK/P also catalyzes the pyrophosphate-producing, inorganic phosphate-dependent dephosphorylation (phosphorolysis) of seryl-phosphorylated HPr (P-Ser-HPr). The two antagonistic activities of HprK/P are regulated by several intracellular metabolites, which change their concentration in response to the absence or presence of rapidly metabolisable carbon sources (glucose, fructose, etc.) in the growth medium. Therefore, by controlling the phosphorylation state of HPr, HPrK/P is a sensor enzyme that plays a major role in the regulation of carbon metabolism and sugar transport: it mediates carbon catabolite repression (CCR), and regulates PTS-catalyzed carbohydrate uptake and inducer exclusion. This is HPr kinase/phosphorylase from Clostridium tetani (strain Massachusetts / E88).